The chain runs to 142 residues: Large ribosomal subunit protein uL13 (142 aa).

The protein belongs to the universal ribosomal protein uL13 family. As to quaternary structure, part of the 50S ribosomal subunit.

Its function is as follows. This protein is one of the early assembly proteins of the 50S ribosomal subunit, although it is not seen to bind rRNA by itself. It is important during the early stages of 50S assembly. This Akkermansia muciniphila (strain ATCC BAA-835 / DSM 22959 / JCM 33894 / BCRC 81048 / CCUG 64013 / CIP 107961 / Muc) protein is Large ribosomal subunit protein uL13.